Here is a 273-residue protein sequence, read N- to C-terminus: Large ribosomal subunit protein uL2 (273 aa).

The interval 228–273 is disordered; it reads VDHPHGGGEGKTSGGRHPVTPWGFPTKGKKTRKNKRTSKFIVKKRK. Residues 254–273 are compositionally biased toward basic residues; that stretch reads KGKKTRKNKRTSKFIVKKRK.

It belongs to the universal ribosomal protein uL2 family. In terms of assembly, part of the 50S ribosomal subunit. Forms a bridge to the 30S subunit in the 70S ribosome.

One of the primary rRNA binding proteins. Required for association of the 30S and 50S subunits to form the 70S ribosome, for tRNA binding and peptide bond formation. It has been suggested to have peptidyltransferase activity; this is somewhat controversial. Makes several contacts with the 16S rRNA in the 70S ribosome. This is Large ribosomal subunit protein uL2 from Rickettsia canadensis (strain McKiel).